We begin with the raw amino-acid sequence, 57 residues long: MSEYTVTGTFQARDGWQSFETEIEAPNENVAEEHTLAEFGSQHGLKRTQIEIEGVDA.

This sequence belongs to the eukaryotic ribosomal protein eL20 family. Part of the 50S ribosomal subunit. Binds 23S rRNA.

The sequence is that of Large ribosomal subunit protein eL20 from Halorhabdus utahensis (strain DSM 12940 / JCM 11049 / AX-2).